A 444-amino-acid chain; its full sequence is GTPase Der (444 aa).

EngA-type G domains are found at residues 2–167 and 173–349; these read LKVA…LKEI and FKFC…ENLN. GTP-binding positions include 8 to 15, 55 to 59, 118 to 121, 179 to 186, 226 to 230, and 291 to 294; these read GKPNVGKS, DTGGL, NKSE, GRPNVGKS, DTAGI, and NKWD. The region spanning 350–434 is the KH-like domain; it reads LKFNSKILTD…PITLYFKNKT (85 aa).

Belongs to the TRAFAC class TrmE-Era-EngA-EngB-Septin-like GTPase superfamily. EngA (Der) GTPase family. As to quaternary structure, associates with the 50S ribosomal subunit.

GTPase that plays an essential role in the late steps of ribosome biogenesis. The polypeptide is GTPase Der (Malacoplasma penetrans (strain HF-2) (Mycoplasma penetrans)).